The primary structure comprises 387 residues: Methylthioribose-1-phosphate isomerase (387 aa).

Asp257 functions as the Proton donor in the catalytic mechanism.

The protein belongs to the eIF-2B alpha/beta/delta subunits family. MtnA subfamily.

The protein resides in the cytoplasm. It localises to the nucleus. It catalyses the reaction 5-(methylsulfanyl)-alpha-D-ribose 1-phosphate = 5-(methylsulfanyl)-D-ribulose 1-phosphate. It participates in amino-acid biosynthesis; L-methionine biosynthesis via salvage pathway; L-methionine from S-methyl-5-thio-alpha-D-ribose 1-phosphate: step 1/6. Its function is as follows. Catalyzes the interconversion of methylthioribose-1-phosphate (MTR-1-P) into methylthioribulose-1-phosphate (MTRu-1-P). The polypeptide is Methylthioribose-1-phosphate isomerase (mri1) (Aspergillus fumigatus (strain CBS 144.89 / FGSC A1163 / CEA10) (Neosartorya fumigata)).